The chain runs to 126 residues: Fluoride-specific ion channel FluC (126 aa).

A run of 4 helical transmembrane segments spans residues 4–24, 35–55, 71–91, and 104–124; these read FMLLGFIAFGGAFGACARYLI, GFPYGTLTVNIVGSLIMGVLM, IIGLGFLGALTTFSTFSMDNV, and LNILLNVTLSITACFIGFQLM. 2 residues coordinate Na(+): glycine 78 and threonine 81.

The protein belongs to the fluoride channel Fluc/FEX (TC 1.A.43) family.

The protein resides in the cell inner membrane. The catalysed reaction is fluoride(in) = fluoride(out). Na(+) is not transported, but it plays an essential structural role and its presence is essential for fluoride channel function. In terms of biological role, fluoride-specific ion channel. Important for reducing fluoride concentration in the cell, thus reducing its toxicity. The polypeptide is Fluoride-specific ion channel FluC (Aliivibrio salmonicida (strain LFI1238) (Vibrio salmonicida (strain LFI1238))).